A 166-amino-acid polypeptide reads, in one-letter code: Large ribosomal subunit protein bL9 (166 aa).

This sequence belongs to the bacterial ribosomal protein bL9 family.

Functionally, binds to the 23S rRNA. This chain is Large ribosomal subunit protein bL9, found in Psychrobacter arcticus (strain DSM 17307 / VKM B-2377 / 273-4).